An 882-amino-acid chain; its full sequence is DNA mismatch repair protein MutS (882 aa).

ATP is bound at residue 626 to 633 (GPNMAGKS).

It belongs to the DNA mismatch repair MutS family.

Its function is as follows. This protein is involved in the repair of mismatches in DNA. It is possible that it carries out the mismatch recognition step. This protein has a weak ATPase activity. The chain is DNA mismatch repair protein MutS from Anaeromyxobacter sp. (strain Fw109-5).